Here is a 954-residue protein sequence, read N- to C-terminus: Glycine dehydrogenase (decarboxylating) (954 aa).

Position 701 is an N6-(pyridoxal phosphate)lysine (Lys701).

Belongs to the GcvP family. The glycine cleavage system is composed of four proteins: P, T, L and H. Pyridoxal 5'-phosphate serves as cofactor.

It carries out the reaction N(6)-[(R)-lipoyl]-L-lysyl-[glycine-cleavage complex H protein] + glycine + H(+) = N(6)-[(R)-S(8)-aminomethyldihydrolipoyl]-L-lysyl-[glycine-cleavage complex H protein] + CO2. Functionally, the glycine cleavage system catalyzes the degradation of glycine. The P protein binds the alpha-amino group of glycine through its pyridoxal phosphate cofactor; CO(2) is released and the remaining methylamine moiety is then transferred to the lipoamide cofactor of the H protein. In Bordetella parapertussis (strain 12822 / ATCC BAA-587 / NCTC 13253), this protein is Glycine dehydrogenase (decarboxylating).